The following is a 423-amino-acid chain: Mannose-6-phosphate isomerase (423 aa).

At alanine 2 the chain carries N-acetylalanine. Phosphoserine occurs at positions 102 and 108. Zn(2+) contacts are provided by glutamine 110, histidine 112, glutamate 137, and histidine 276. Arginine 295 is an active-site residue.

Belongs to the mannose-6-phosphate isomerase type 1 family. The cofactor is Zn(2+).

The protein resides in the cytoplasm. The catalysed reaction is D-mannose 6-phosphate = D-fructose 6-phosphate. Its pathway is nucleotide-sugar biosynthesis; GDP-alpha-D-mannose biosynthesis; alpha-D-mannose 1-phosphate from D-fructose 6-phosphate: step 1/2. Its function is as follows. Isomerase that catalyzes the interconversion of fructose-6-P and mannose-6-P and has a critical role in the supply of D-mannose derivatives required for many eukaryotic glycosylation reactions. In Pan troglodytes (Chimpanzee), this protein is Mannose-6-phosphate isomerase (MPI).